Consider the following 249-residue polypeptide: Protein TIFY 10B (249 aa).

Residues 113–148 form the Tify domain; that stretch reads PESQSAPLTIFYGGRVMVFDDFSAEKAKEVIDLANK. Positions 204 to 229 match the Jas motif; it reads PIARRASLHRFLEKRKDRITSKAPYQ. The short motif at 206–213 is the Nuclear localization signal element; that stretch reads ARRASLHR. The segment at 225–249 is disordered; it reads KAPYQIDGSAEASSKPTNPAWLSSR. A compositionally biased stretch (polar residues) spans 235 to 249; that stretch reads EASSKPTNPAWLSSR.

It belongs to the TIFY/JAZ family. As to quaternary structure, homo- and heterodimer. Interacts with COI1, MYC2, MYC3, MYC4, AFPH2/NINJA, TIFY10A/JAZ1, TIFY6B/JAZ3, TIFY11A/JAZ5, TIFY11B/JAZ6, TIFY5A/JAZ8, TIFY7/JAZ9, TIFY9/JAZ10, TIFY3A/JAZ11 and TIFY3B/JAZ12. Interacts with RHD6 and RSL1. (Microbial infection) Interacts with the pathogenic Pseudomonas syringae HopZ1a protein. In terms of processing, (Microbial infection) Acetylated by Pseudomonas syringae HopZ1a. Post-translationally, ubiquitinated. Targeted for degradation by the SCF(COI1) E3 ubiquitin ligase-proteasome pathway during jasmonate signaling. In terms of tissue distribution, expressed in cotyledons, hypocotyls, roots, sepals, petal vascular tissue and stigmas of developing flowers. Expressed in stamen filaments after jasmonic acid treatment.

The protein resides in the nucleus. Its function is as follows. Repressor of jasmonate responses. Jasmonoyl-isoleucine (JA-Ile) specifically promotes COI1-TIFY10B/JAZ2 interaction. Activated by MYC2, MYC3 and MYC4 transcription factors. Interacts with and suppresses RHD6 and RSL1 transcription factor activities to negatively regulate jasmonate-stimulated root hair development. The sequence is that of Protein TIFY 10B from Arabidopsis thaliana (Mouse-ear cress).